The sequence spans 604 residues: Rhotekin-2 (604 aa).

The REM-1 domain maps to 1 to 74 (MEGQLLRGLA…LQKSKEEIAN (74 aa)). Positions 53-79 (VCSARIQAYTAELQKSKEEIANQTGAR) form a coiled coil. The 107-residue stretch at 281–387 (ADAFAGFLNE…WMGAFRQHFF (107 aa)) folds into the PH domain. Residues 481–590 (LSPIGEPAPD…PVPVPRQKSI (110 aa)) form a disordered region. The span at 514–527 (GRANQSKDSATQAG) shows a compositional bias: polar residues. Over residues 529-543 (SGASSSPSDPRLSPP) the composition is skewed to low complexity.

Functionally, may play an important role in lymphopoiesis. This chain is Rhotekin-2 (Rtkn2), found in Mus musculus (Mouse).